Here is a 477-residue protein sequence, read N- to C-terminus: Glycogen synthase (477 aa).

Lys15 is a binding site for ADP-alpha-D-glucose.

This sequence belongs to the glycosyltransferase 1 family. Bacterial/plant glycogen synthase subfamily.

It catalyses the reaction [(1-&gt;4)-alpha-D-glucosyl](n) + ADP-alpha-D-glucose = [(1-&gt;4)-alpha-D-glucosyl](n+1) + ADP + H(+). It functions in the pathway glycan biosynthesis; glycogen biosynthesis. Functionally, synthesizes alpha-1,4-glucan chains using ADP-glucose. The protein is Glycogen synthase of Escherichia coli O139:H28 (strain E24377A / ETEC).